The primary structure comprises 100 residues: Aspartyl/glutamyl-tRNA(Asn/Gln) amidotransferase subunit C (100 aa).

It belongs to the GatC family. Heterotrimer of A, B and C subunits.

The catalysed reaction is L-glutamyl-tRNA(Gln) + L-glutamine + ATP + H2O = L-glutaminyl-tRNA(Gln) + L-glutamate + ADP + phosphate + H(+). It carries out the reaction L-aspartyl-tRNA(Asn) + L-glutamine + ATP + H2O = L-asparaginyl-tRNA(Asn) + L-glutamate + ADP + phosphate + 2 H(+). Its function is as follows. Allows the formation of correctly charged Asn-tRNA(Asn) or Gln-tRNA(Gln) through the transamidation of misacylated Asp-tRNA(Asn) or Glu-tRNA(Gln) in organisms which lack either or both of asparaginyl-tRNA or glutaminyl-tRNA synthetases. The reaction takes place in the presence of glutamine and ATP through an activated phospho-Asp-tRNA(Asn) or phospho-Glu-tRNA(Gln). This is Aspartyl/glutamyl-tRNA(Asn/Gln) amidotransferase subunit C from Streptococcus pneumoniae (strain Taiwan19F-14).